A 382-amino-acid polypeptide reads, in one-letter code: Galactose-1-phosphate uridylyltransferase (382 aa).

Residues Cys-52 and Cys-55 each coordinate Zn(2+). Residues Ala-61 and 77–78 (ND) contribute to the UDP-alpha-D-glucose site. His-121 lines the Zn(2+) pocket. UDP-alpha-D-glucose is bound at residue Asn-185. His-196 contributes to the Zn(2+) binding site. The Tele-UMP-histidine intermediate role is filled by His-198. Gln-200 is a UDP-alpha-D-glucose binding site. Fe cation-binding residues include Glu-214, His-313, His-330, and His-332. Residues 345–348 (KFLV) and 350–351 (FE) each bind UDP-alpha-D-glucose.

The protein belongs to the galactose-1-phosphate uridylyltransferase type 1 family. In terms of assembly, homodimer. Zn(2+) is required as a cofactor.

It carries out the reaction alpha-D-galactose 1-phosphate + UDP-alpha-D-glucose = alpha-D-glucose 1-phosphate + UDP-alpha-D-galactose. It functions in the pathway carbohydrate metabolism; galactose metabolism. Essential for growth on galactose but not for cellulase induction. The polypeptide is Galactose-1-phosphate uridylyltransferase (gal7) (Hypocrea jecorina (Trichoderma reesei)).